Here is a 212-residue protein sequence, read N- to C-terminus: MRVGIDEAGRGALIGPMIVAGVVISDTKLKFLKGIGVKDSKQLTRERREKLFDIVANTVEAFTVVKVFPYEIDNYNLNDLTYDAVSKIILSLSSFNPEIVTVDKVGDEKPVIELINKLGYKSNVVHKADVLFVEASAASIIAKVIRDNYIDELKQVYGDFGSGYPADPRTIKWLKSFYEKNPNPPPIIRRSWKILRSTAPLYYISKEGRRLW.

An RNase H type-2 domain is found at 1-204 (MRVGIDEAGR…LRSTAPLYYI (204 aa)). A divalent metal cation-binding residues include Asp6, Glu7, and Asp103.

The protein belongs to the RNase HII family. The cofactor is Mn(2+). Mg(2+) serves as cofactor.

The protein resides in the cytoplasm. It catalyses the reaction Endonucleolytic cleavage to 5'-phosphomonoester.. Functionally, endonuclease that specifically degrades the RNA of RNA-DNA hybrids. The sequence is that of Ribonuclease HII from Saccharolobus solfataricus (strain ATCC 35092 / DSM 1617 / JCM 11322 / P2) (Sulfolobus solfataricus).